Reading from the N-terminus, the 305-residue chain is MLTFQQIILTLQKYWDAQGCALLQPYDMEVGAGTSHTATFLRAIGPEPWRAAYVQPSRRPKDGRYGENPNRLQHYYQYQVVLKPAPANILELYLGSLEALGFDLKANDIRFVEDDWENPTLGAWGLGWEVWLNGMEVTQFTYFQQVGGINCKPITGEITYGLERLAMYLQGVDNVYDLRWTDKLSYGDVYKQNEIEQSTYNFEHSDADFLFTAFGAHEKQALNLIDNKLALPAYEQVLKAAHTFNLLDARGAISVTERAAYIGRIRNLARSVARSYLDSRARLGFPMAKPEHAAEVLAQIEKEAA.

This sequence belongs to the class-II aminoacyl-tRNA synthetase family. As to quaternary structure, tetramer of two alpha and two beta subunits.

It is found in the cytoplasm. The enzyme catalyses tRNA(Gly) + glycine + ATP = glycyl-tRNA(Gly) + AMP + diphosphate. This is Glycine--tRNA ligase alpha subunit from Janthinobacterium sp. (strain Marseille) (Minibacterium massiliensis).